The chain runs to 264 residues: Heavy metal-associated isoprenylated plant protein 17 (264 aa).

2 consecutive HMA domains span residues 32 to 95 (VTDA…KKIE) and 133 to 204 (IMEV…KERQ). A coiled-coil region spans residues 185–218 (SRKLNKKMHQKIKKAEKERQEWESEMMLREAEEE). Cys-261 carries the post-translational modification Cysteine methyl ester. Cys-261 carries the S-farnesyl cysteine lipid modification. Residues 262–264 (SIS) constitute a propeptide, removed in mature form.

The protein belongs to the HIPP family.

Functionally, probable heavy-metal-binding protein. This chain is Heavy metal-associated isoprenylated plant protein 17, found in Arabidopsis thaliana (Mouse-ear cress).